Reading from the N-terminus, the 456-residue chain is tRNA modification GTPase MnmE (456 aa).

3 residues coordinate (6S)-5-formyl-5,6,7,8-tetrahydrofolate: Arg-21, Glu-85, and Lys-124. The TrmE-type G domain occupies 220–379 (QLRIVLYGEP…LLDEIQKKAA (160 aa)). K(+) is bound at residue Asn-230. GTP is bound by residues 230-235 (NTGKSS), 249-255 (SEIPGTT), and 274-277 (DTAG). Residue Ser-234 participates in Mg(2+) binding. K(+) is bound by residues Ser-249, Ile-251, and Thr-254. Thr-255 contributes to the Mg(2+) binding site. Lys-456 provides a ligand contact to (6S)-5-formyl-5,6,7,8-tetrahydrofolate.

Belongs to the TRAFAC class TrmE-Era-EngA-EngB-Septin-like GTPase superfamily. TrmE GTPase family. In terms of assembly, homodimer. Heterotetramer of two MnmE and two MnmG subunits. K(+) serves as cofactor.

It is found in the cytoplasm. Exhibits a very high intrinsic GTPase hydrolysis rate. Involved in the addition of a carboxymethylaminomethyl (cmnm) group at the wobble position (U34) of certain tRNAs, forming tRNA-cmnm(5)s(2)U34. In Leptospira borgpetersenii serovar Hardjo-bovis (strain JB197), this protein is tRNA modification GTPase MnmE.